Reading from the N-terminus, the 409-residue chain is Gamma-glutamyl phosphate reductase (409 aa).

It belongs to the gamma-glutamyl phosphate reductase family.

The protein localises to the cytoplasm. The catalysed reaction is L-glutamate 5-semialdehyde + phosphate + NADP(+) = L-glutamyl 5-phosphate + NADPH + H(+). It participates in amino-acid biosynthesis; L-proline biosynthesis; L-glutamate 5-semialdehyde from L-glutamate: step 2/2. Its function is as follows. Catalyzes the NADPH-dependent reduction of L-glutamate 5-phosphate into L-glutamate 5-semialdehyde and phosphate. The product spontaneously undergoes cyclization to form 1-pyrroline-5-carboxylate. This chain is Gamma-glutamyl phosphate reductase, found in Mycobacterium leprae (strain TN).